The following is a 305-amino-acid chain: Protein FdhE homolog (305 aa).

This sequence belongs to the FdhE family.

The protein localises to the cytoplasm. In terms of biological role, necessary for formate dehydrogenase activity. This Actinobacillus pleuropneumoniae serotype 7 (strain AP76) protein is Protein FdhE homolog.